The following is a 105-amino-acid chain: Antitoxin YfjZ (105 aa).

It belongs to the CbeA/YafW/YfjZ antitoxin family.

In terms of biological role, antitoxin component of a type IV toxin-antitoxin (TA) system. Antitoxin that counteracts the effect of cognate toxin YpjF. Also counteracts the effect of non-cognate toxins CbtA and YfkI. The polypeptide is Antitoxin YfjZ (yfjZ) (Escherichia coli (strain K12)).